The sequence spans 339 residues: Serpentine receptor class alpha-21 (339 aa).

5 consecutive transmembrane segments (helical) span residues 30–50 (FNFLFITTVILLSYCFTWLAI), 150–170 (FIAVSLLVLQLLLTLVSFYIA), 199–219 (VRTVVMVCCLVVTGFIYYLSV), 250–270 (ILIVLKLFCNMLSSIGINLLL), and 282–302 (VLVALFLPGVTYANLCLPLVI).

The protein belongs to the nematode receptor-like protein sra family.

Its subcellular location is the membrane. This Caenorhabditis elegans protein is Serpentine receptor class alpha-21 (sra-21).